The sequence spans 211 residues: FMN-dependent NADH:quinone oxidoreductase 3 (211 aa).

17-19 (SFS) contacts FMN.

The protein belongs to the azoreductase type 1 family. As to quaternary structure, homodimer. Requires FMN as cofactor.

The enzyme catalyses 2 a quinone + NADH + H(+) = 2 a 1,4-benzosemiquinone + NAD(+). The catalysed reaction is N,N-dimethyl-1,4-phenylenediamine + anthranilate + 2 NAD(+) = 2-(4-dimethylaminophenyl)diazenylbenzoate + 2 NADH + 2 H(+). In terms of biological role, quinone reductase that provides resistance to thiol-specific stress caused by electrophilic quinones. Also exhibits azoreductase activity. Catalyzes the reductive cleavage of the azo bond in aromatic azo compounds to the corresponding amines. The sequence is that of FMN-dependent NADH:quinone oxidoreductase 3 from Halalkalibacterium halodurans (strain ATCC BAA-125 / DSM 18197 / FERM 7344 / JCM 9153 / C-125) (Bacillus halodurans).